The sequence spans 150 residues: MGSSSLLLVCLAGMVYLTEAAPLVSHGSIDSKCPLMVKVLDAVRGRPATSIAVKVSKMSEEGDWKEFANGKTNEFGEIHELTTDEQFVQGLYKVEFDTSSYWKALGVSPFHEYADVVFSANDSGHRHYTIAALLSPFSYSTTAVVSDPKE.

Positions 1 to 20 (MGSSSLLLVCLAGMVYLTEA) are cleaved as a signal peptide. Cysteine 33 carries the post-translational modification Sulfocysteine. L-thyroxine-binding residues include lysine 38, glutamate 77, and serine 140.

Belongs to the transthyretin family. In terms of assembly, homotetramer. Dimer of dimers. In the homotetramer, subunits assemble around a central channel that can accommodate two ligand molecules. Interacts with RBP4. Post-translationally, sulfonation of the reactive cysteine Cys-33 enhances the stability of the native conformation of TTR, avoiding misassembly of the protein leading to amyloid formation. In terms of tissue distribution, detected in choroid plexus (at protein level). Detected in choroid plexus.

It is found in the secreted. In terms of biological role, thyroid hormone-binding protein. Probably transports thyroxine from the bloodstream to the brain. The protein is Transthyretin (TTR) of Tiliqua rugosa (Shingleback lizard).